Here is a 402-residue protein sequence, read N- to C-terminus: D-galactonate dehydratase family member RspA (402 aa).

Substrate-binding residues include N37 and H122. The Proton donor/acceptor role is filled by Y159. D210 lines the Mg(2+) pocket. Catalysis depends on H212, which acts as the Proton donor/acceptor. Residues E236 and E262 each contribute to the Mg(2+) site. E262, R283, H312, D316, and E339 together coordinate substrate.

This sequence belongs to the mandelate racemase/muconate lactonizing enzyme family. GalD subfamily. Requires Mg(2+) as cofactor.

It carries out the reaction D-mannonate = 2-dehydro-3-deoxy-D-gluconate + H2O. Functionally, has low D-mannonate dehydratase activity (in vitro), suggesting that this is not a physiological substrate and that it has no significant role in D-mannonate degradation in vivo. Has no detectable activity with a panel of 70 other acid sugars (in vitro). This is D-galactonate dehydratase family member RspA (rspA) from Cellvibrio japonicus (strain Ueda107) (Pseudomonas fluorescens subsp. cellulosa).